A 271-amino-acid polypeptide reads, in one-letter code: Urease accessory protein UreD (271 aa).

It belongs to the UreD family. In terms of assembly, ureD, UreF and UreG form a complex that acts as a GTP-hydrolysis-dependent molecular chaperone, activating the urease apoprotein by helping to assemble the nickel containing metallocenter of UreC. The UreE protein probably delivers the nickel.

It is found in the cytoplasm. Functionally, required for maturation of urease via the functional incorporation of the urease nickel metallocenter. The polypeptide is Urease accessory protein UreD (Mycolicibacterium smegmatis (strain ATCC 700084 / mc(2)155) (Mycobacterium smegmatis)).